The following is a 306-amino-acid chain: NAD kinase 1 (306 aa).

The Proton acceptor role is filled by Asp67. NAD(+) is bound by residues 67–68 (DG), 149–150 (ND), and Asp181.

It belongs to the NAD kinase family. It depends on a divalent metal cation as a cofactor.

The protein resides in the cytoplasm. The enzyme catalyses NAD(+) + ATP = ADP + NADP(+) + H(+). Involved in the regulation of the intracellular balance of NAD and NADP, and is a key enzyme in the biosynthesis of NADP. Catalyzes specifically the phosphorylation on 2'-hydroxyl of the adenosine moiety of NAD to yield NADP. The sequence is that of NAD kinase 1 from Synechococcus sp. (strain ATCC 27144 / PCC 6301 / SAUG 1402/1) (Anacystis nidulans).